The chain runs to 78 residues: Gas vesicle protein A (78 aa).

Residues 9 to 19 (LAEVLDRVLDK) form an alpha helix 1 region. The interval 23 to 31 (VDVWARISL) is beta-strand 1. A beta turn region spans residues 32-34 (VGI). The interval 35-43 (EILTVEARV) is beta-strand 2. Residues 48–67 (VDTFLHYAEEIAKIEQAELT) form an alpha helix 2 region.

It belongs to the gas vesicle GvpA family. The gas vesicle shell is 2 nm thick and consists of a single layer of this protein. It forms helical ribs nearly perpendicular to the long axis of the vesicle. Modeled as antiparallel homodimers.

Its subcellular location is the gas vesicle shell. In terms of biological role, gas vesicles are hollow, gas filled proteinaceous nanostructures found in some microorganisms. During planktonic growth they allow positioning of the organism at a favorable depth for light or nutrient acquisition. GvpA forms the protein shell. This gene replaces p-gvpA of H.salinarum very poorly, only about 1% of GVs are formed; the few gas vesicles formed are quite strong with a very high critical collapse pressure (CCP) of 0.213 MPa. Functionally, expression of a 9.5 kb mc-vac DNA fragment containing 2 divergently transcribed regions (gvpD-gvpE-gvpF-gvpG-gvpH-gvpI-gvpJ-gvpK-gvpL-gvpM and gvpA-gvpC-gvpN-gvpO) allows H.volcanii to produce gas vesicles. The polypeptide is Gas vesicle protein A (Haloferax mediterranei (strain ATCC 33500 / DSM 1411 / JCM 8866 / NBRC 14739 / NCIMB 2177 / R-4) (Halobacterium mediterranei)).